The sequence spans 407 residues: uncharacterized protein (407 aa).

12 helical membrane-spanning segments follow: residues 22–42, 51–71, 101–121, 126–146, 154–174, 179–199, 227–247, 258–278, 286–306, 309–329, 347–367, and 369–389; these read IVSV…PLAV, LGFS…ATLA, ALLL…GLLV, VLGI…IGRV, VISW…PVGV, ALIP…GYYL, GLGL…ITLY, LSLT…ANTI, VAIV…LAPV, VALV…PALG, AYSV…GYVA, and AFGY…GVAL.

Belongs to the major facilitator superfamily. YhhS family.

It localises to the cell inner membrane. This is an uncharacterized protein from Burkholderia mallei (strain NCTC 10229).